Reading from the N-terminus, the 307-residue chain is Beta-lactamase (307 aa).

Residues 1–34 (MRNRGFGRRELLVAMAMLVSVTGCARHASGARPA) constitute a signal peptide (tat-type signal). Ser84 (acyl-ester intermediate) is an active-site residue. Ser142 is a substrate binding site. The active-site Proton acceptor is Glu182. Residue 251–253 (TGT) coordinates substrate.

The protein belongs to the class-A beta-lactamase family. As to quaternary structure, monomer. In terms of processing, exported by the Tat system. The position of the signal peptide cleavage has not been experimentally proven.

It localises to the periplasm. It is found in the secreted. The catalysed reaction is a beta-lactam + H2O = a substituted beta-amino acid. With respect to regulation, is inhibited by clavulanate. Extended spectrum beta-lactamase (ESBL) that inactivates beta-lactam antibiotics by hydrolyzing the amide group of the beta-lactam ring. Displays high levels of penicillinase and cephalosporinase activity as well as measurable activity with carbapenems, including imipenem and meropenem. Plays a primary role in the intrinsic resistance of mycobacteria to beta-lactam antibiotics. The polypeptide is Beta-lactamase (blaC) (Mycobacterium bovis (strain ATCC BAA-935 / AF2122/97)).